The following is a 342-amino-acid chain: GTPase Obg (342 aa).

The region spanning 1-159 is the Obg domain; the sequence is MQFIDQAQIE…KLLRLELKLL (159 aa). The OBG-type G domain maps to 160 to 330; sequence AEVGIIGLPN…MLQEVWGILD (171 aa). GTP contacts are provided by residues 166–173, 191–195, 213–216, 280–283, and 311–313; these read GLPNAGKS, FTTLI, DIPG, NKID, and SAV. Residues Ser-173 and Thr-193 each coordinate Mg(2+).

Belongs to the TRAFAC class OBG-HflX-like GTPase superfamily. OBG GTPase family. In terms of assembly, monomer. It depends on Mg(2+) as a cofactor.

The protein localises to the cytoplasm. Functionally, an essential GTPase which binds GTP, GDP and possibly (p)ppGpp with moderate affinity, with high nucleotide exchange rates and a fairly low GTP hydrolysis rate. Plays a role in control of the cell cycle, stress response, ribosome biogenesis and in those bacteria that undergo differentiation, in morphogenesis control. The sequence is that of GTPase Obg from Nostoc sp. (strain PCC 7120 / SAG 25.82 / UTEX 2576).